The chain runs to 228 residues: MEIKEMVTSEMPRERLLSHGAKSLSNTELLAILINTGRKGFLSIDISNELLKSASNLNELKKSSINDLIQVKGIGLQKAITLKAAFELGERMGRRAENNRIKITQPSDVADYMIPTMKDLTQEHFVILLLNSKNVVIKESCVFKGTLNSSIVHPREIFSIAVRENANAIIAVHNHPSGDVTPSQEDIITTMRLKESGLILGIDLLDHIIIGDNRFTSLVEAGYFDEND.

In terms of domain architecture, MPN spans 102–224 (KITQPSDVAD…FTSLVEAGYF (123 aa)). Histidine 173, histidine 175, and aspartate 186 together coordinate Zn(2+). The JAMM motif motif lies at 173-186 (HNHPSGDVTPSQED).

The protein belongs to the UPF0758 family.

The protein is UPF0758 protein SAB1521c of Staphylococcus aureus (strain bovine RF122 / ET3-1).